The following is an 83-amino-acid chain: Short neurotoxin 1 (83 aa).

Residues 1–21 form the signal peptide; it reads MKTLLLTLVVVTIVCLDLGYT. 4 disulfides stabilise this stretch: Cys-24-Cys-45, Cys-38-Cys-62, Cys-64-Cys-75, and Cys-76-Cys-81.

It belongs to the three-finger toxin family. Short-chain subfamily. Type I alpha-neurotoxin sub-subfamily. In terms of tissue distribution, expressed by the venom gland.

The protein localises to the secreted. In terms of biological role, binds to muscle nicotinic acetylcholine receptor (nAChR) and inhibit acetylcholine from binding to the receptor, thereby impairing neuromuscular transmission. The chain is Short neurotoxin 1 from Oxyuranus scutellatus scutellatus (Australian taipan).